The primary structure comprises 181 residues: MTTASPSQVRQNYHQDSEAAINRQINLELYASYVYLSMSYYFDRDDVALKNFAKYFLHQSHEEREHAERLMKLQNQRGGRIFLQDIKKPDRDDWENGLTAMECALCLERSVNQSLLELHKLATEKNDPHLCDFIETHYLNEQVEAIKELGDHITNLRKMGAPGSGMAEYLFDKHTLGHSES.

N-acetylmethionine is present on Met1. Thr2 carries the N-acetylthreonine; in Ferritin heavy chain, N-terminally processed modification. Residues Gln11 to Gly160 form the Ferritin-like diiron domain. Positions 28, 63, 66, 108, and 142 each coordinate Fe cation. Ser179 carries the phosphoserine modification.

It belongs to the ferritin family. In terms of assembly, oligomer of 24 subunits. There are two types of subunits: L (light) chain and H (heavy) chain. The major chain can be light or heavy, depending on the species and tissue type. The functional molecule forms a roughly spherical shell with a diameter of 12 nm and contains a central cavity into which the insoluble mineral iron core is deposited. Interacts with NCOA4; NCOA4 promotes targeting of the iron-binding ferritin complex to autolysosomes following starvation or iron depletion.

The protein localises to the cytoplasm. Its subcellular location is the lysosome. It is found in the cytoplasmic vesicle. It localises to the autophagosome. The enzyme catalyses 4 Fe(2+) + O2 + 4 H(+) = 4 Fe(3+) + 2 H2O. Stores iron in a soluble, non-toxic, readily available form. Important for iron homeostasis. Has ferroxidase activity. Iron is taken up in the ferrous form and deposited as ferric hydroxides after oxidation. Also plays a role in delivery of iron to cells. Mediates iron uptake in capsule cells of the developing kidney. Delivery to lysosomes is mediated by the cargo receptor NCOA4 for autophagic degradation and release of iron. The polypeptide is Ferritin heavy chain (FTH1) (Bos taurus (Bovine)).